Here is an 87-residue protein sequence, read N- to C-terminus: Ragulator complex protein LAMTOR4 homolog (87 aa).

The protein belongs to the LAMTOR4 family. As to quaternary structure, part of the Ragulator complex.

It is found in the lysosome. Functionally, regulator of the TOR pathway, a signaling cascade that promotes cell growth in response to growth factors, energy levels, and amino acids. As part of the Ragulator complex, may activate the TOR signaling cascade in response to amino acids. The chain is Ragulator complex protein LAMTOR4 homolog from Dictyostelium discoideum (Social amoeba).